Consider the following 701-residue polypeptide: C6 finger domain transcription factor nscR (701 aa).

The zn(2)-C6 fungal-type DNA-binding region spans 17–43; sequence CELCRERKVKCDKLDPCTNCASAGVVC.

It is found in the nucleus. Its function is as follows. Transcription factor that specifically regulates the neosartoricin B biosynthesis gene cluster. This chain is C6 finger domain transcription factor nscR, found in Arthroderma gypseum (strain ATCC MYA-4604 / CBS 118893) (Microsporum gypseum).